The chain runs to 86 residues: Acyl carrier protein (86 aa).

One can recognise a Carrier domain in the interval serine 7–lysine 85. Serine 45 carries the post-translational modification O-(pantetheine 4'-phosphoryl)serine.

Belongs to the acyl carrier protein (ACP) family. Post-translationally, 4'-phosphopantetheine is transferred from CoA to a specific serine of apo-ACP by AcpS. This modification is essential for activity because fatty acids are bound in thioester linkage to the sulfhydryl of the prosthetic group.

It is found in the cytoplasm. The protein operates within lipid metabolism; fatty acid biosynthesis. In terms of biological role, carrier of the growing fatty acid chain in fatty acid biosynthesis. This chain is Acyl carrier protein, found in Rickettsia bellii (strain RML369-C).